A 909-amino-acid chain; its full sequence is Probable DNA-directed RNA polymerase subunit beta (909 aa).

It belongs to the RNA polymerase beta chain family.

The catalysed reaction is RNA(n) + a ribonucleoside 5'-triphosphate = RNA(n+1) + diphosphate. Required for late and very late gene expression. May be a component of the novel RNA polymerase activity induced by baculovirus infection. In Lepidoptera (butterflies and moths), this protein is Probable DNA-directed RNA polymerase subunit beta (LEF-8).